The sequence spans 152 residues: Putative pre-16S rRNA nuclease (152 aa).

This sequence belongs to the YqgF nuclease family.

The protein resides in the cytoplasm. Could be a nuclease involved in processing of the 5'-end of pre-16S rRNA. The chain is Putative pre-16S rRNA nuclease from Bifidobacterium longum (strain DJO10A).